Here is a 405-residue protein sequence, read N- to C-terminus: Acetylornithine aminotransferase 1 (405 aa).

Residues 103–104 (GA) and Phe-136 contribute to the pyridoxal 5'-phosphate site. Arg-139 serves as a coordination point for N(2)-acetyl-L-ornithine. 221-224 (DEVQ) is a pyridoxal 5'-phosphate binding site. N6-(pyridoxal phosphate)lysine is present on Lys-250. Ser-278 serves as a coordination point for N(2)-acetyl-L-ornithine. Thr-279 contributes to the pyridoxal 5'-phosphate binding site.

Belongs to the class-III pyridoxal-phosphate-dependent aminotransferase family. ArgD subfamily. Homodimer. Pyridoxal 5'-phosphate is required as a cofactor.

The protein localises to the cytoplasm. It carries out the reaction N(2)-acetyl-L-ornithine + 2-oxoglutarate = N-acetyl-L-glutamate 5-semialdehyde + L-glutamate. Its pathway is amino-acid biosynthesis; L-arginine biosynthesis; N(2)-acetyl-L-ornithine from L-glutamate: step 4/4. The chain is Acetylornithine aminotransferase 1 from Bradyrhizobium diazoefficiens (strain JCM 10833 / BCRC 13528 / IAM 13628 / NBRC 14792 / USDA 110).